A 929-amino-acid polypeptide reads, in one-letter code: Bifunctional uridylyltransferase/uridylyl-removing enzyme (929 aa).

A uridylyltransferase region spans residues 1 to 383 (MDSVTTEHKQ…RPTPAKRRVP (383 aa)). The tract at residues 384–739 (DSDDFIVDNN…VGFDEVRGVT (356 aa)) is uridylyl-removing. Residues 499 to 622 (VDEHLIRCVG…VQSVEQMKLL (124 aa)) enclose the HD domain. 2 consecutive ACT domains span residues 740–822 (ELTI…VVAR) and 850–927 (VIEV…AVQP).

It belongs to the GlnD family. Mg(2+) is required as a cofactor.

The enzyme catalyses [protein-PII]-L-tyrosine + UTP = [protein-PII]-uridylyl-L-tyrosine + diphosphate. It carries out the reaction [protein-PII]-uridylyl-L-tyrosine + H2O = [protein-PII]-L-tyrosine + UMP + H(+). With respect to regulation, uridylyltransferase (UTase) activity is inhibited by glutamine, while glutamine activates uridylyl-removing (UR) activity. Functionally, modifies, by uridylylation and deuridylylation, the PII regulatory proteins (GlnB and homologs), in response to the nitrogen status of the cell that GlnD senses through the glutamine level. Under low glutamine levels, catalyzes the conversion of the PII proteins and UTP to PII-UMP and PPi, while under higher glutamine levels, GlnD hydrolyzes PII-UMP to PII and UMP (deuridylylation). Thus, controls uridylylation state and activity of the PII proteins, and plays an important role in the regulation of nitrogen fixation and metabolism. In Bradyrhizobium diazoefficiens (strain JCM 10833 / BCRC 13528 / IAM 13628 / NBRC 14792 / USDA 110), this protein is Bifunctional uridylyltransferase/uridylyl-removing enzyme.